A 24-amino-acid polypeptide reads, in one-letter code: Neurotoxin 5 (24 aa).

The 23-residue stretch at 2–24 folds into the LCN-type CS-alpha/beta domain; that stretch reads RDAYIAQNYNCVYTCFKNDYCND.

Belongs to the long (4 C-C) scorpion toxin superfamily. Sodium channel inhibitor family. Alpha subfamily. Expressed by the venom gland.

The protein resides in the secreted. Its function is as follows. Binds to sodium channels (Nav) and inhibits the inactivation of the activated channels, thereby blocking neuronal transmission. The chain is Neurotoxin 5 from Buthus occitanus tunetanus (Common European scorpion).